Reading from the N-terminus, the 190-residue chain is Anthranilate synthase component II (190 aa).

A Glutamine amidotransferase type-1 domain is found at methionine 1 to alanine 190. Residue glycine 51–glycine 53 participates in L-glutamine binding. Cysteine 76 (nucleophile; for GATase activity) is an active-site residue. Residues glutamine 80 and serine 126–leucine 127 each bind L-glutamine. Catalysis depends on residues histidine 167 and glutamate 169.

As to quaternary structure, tetramer of two components I and two components II.

The catalysed reaction is chorismate + L-glutamine = anthranilate + pyruvate + L-glutamate + H(+). It participates in amino-acid biosynthesis; L-tryptophan biosynthesis; L-tryptophan from chorismate: step 1/5. The protein is Anthranilate synthase component II (trpG2) of Haloarcula marismortui (strain ATCC 43049 / DSM 3752 / JCM 8966 / VKM B-1809) (Halobacterium marismortui).